Reading from the N-terminus, the 282-residue chain is F-box/SPRY domain-containing protein 1 (282 aa).

Positions 1–32 (MAAAAINAAAPPPPVAPTAPPPPPPPPLSQAS) are disordered. Positions 10–28 (APPPPVAPTAPPPPPPPPL) are enriched in pro residues. Positions 29-78 (SQASGRLPSRVLELVFSYLDLPDLRSCGLVCKHWYRCLHGDENSEVWRSL) constitute an F-box domain. Residues 88–280 (LRTDILCNLP…VTLVYLGKPL (193 aa)) form the B30.2/SPRY domain.

The protein belongs to the FBXO45/Fsn family. Probable component of a E3 ubiquitin ligase complex.

Its pathway is protein modification; protein ubiquitination. This Xenopus tropicalis (Western clawed frog) protein is F-box/SPRY domain-containing protein 1 (fbxo45).